We begin with the raw amino-acid sequence, 464 residues long: E3 ubiquitin-protein ligase MYLIP-B (464 aa).

The FERM domain maps to 1-279; that stretch reads MLCHITRPDS…EIHAFYRCDT (279 aa). The segment at 381–416 adopts an RING-type zinc-finger fold; it reads CALCCEQEISAAFCPCGHMFCCYNCASQLQCCPVCR.

In terms of assembly, interacts with anxa5.

It localises to the cytoplasm. Its subcellular location is the cytosol. The catalysed reaction is S-ubiquitinyl-[E2 ubiquitin-conjugating enzyme]-L-cysteine + [acceptor protein]-L-lysine = [E2 ubiquitin-conjugating enzyme]-L-cysteine + N(6)-ubiquitinyl-[acceptor protein]-L-lysine.. It functions in the pathway protein modification; protein ubiquitination. Functionally, E3 ubiquitin-protein ligase that mediates ubiquitination and subsequent proteasomal degradation of myosin regulatory light chain (MRLC). Regulates cell movements during gastrulation by acting downstream of fz7 to antagonize the frizzled-signaling pathway. This Danio rerio (Zebrafish) protein is E3 ubiquitin-protein ligase MYLIP-B.